Reading from the N-terminus, the 456-residue chain is Bis(5'-adenosyl)-triphosphatase enpp4 (456 aa).

Residues M1–G18 form the signal peptide. The Extracellular segment spans residues Y19–A410. Positions 37 and 73 each coordinate Zn(2+). T73 (AMP-threonine intermediate) is an active-site residue. N94 contributes to the substrate binding site. An N-linked (GlcNAc...) asparagine glycan is attached at N148. Y157 lines the substrate pocket. A glycan (N-linked (GlcNAc...) asparagine) is linked at N169. Residues D192, H196, D240, and H241 each coordinate Zn(2+). Position 192 (D192) interacts with substrate. A disulfide bond links C257 and C290. 2 N-linked (GlcNAc...) asparagine glycosylation sites follow: N279 and N330. A Zn(2+)-binding site is contributed by H339. N389 is a glycosylation site (N-linked (GlcNAc...) asparagine). C397 and C404 are joined by a disulfide. The chain crosses the membrane as a helical span at residues I411–M431. Topologically, residues R432 to D456 are cytoplasmic.

This sequence belongs to the nucleotide pyrophosphatase/phosphodiesterase family. Requires Zn(2+) as cofactor.

Its subcellular location is the cell membrane. It carries out the reaction P(1),P(3)-bis(5'-adenosyl) triphosphate + H2O = AMP + ADP + 2 H(+). Functionally, hydrolyzes extracellular Ap3A into AMP and ADP, and Ap4A into AMP and ATP. Ap3A and Ap4A are diadenosine polyphosphates thought to induce proliferation of vascular smooth muscle cells. Acts as a procoagulant, mediating platelet aggregation at the site of nascent thrombus via release of ADP from Ap3A and activation of ADP receptors. In Mus musculus (Mouse), this protein is Bis(5'-adenosyl)-triphosphatase enpp4 (Enpp4).